The sequence spans 313 residues: Biotin synthase (313 aa).

In terms of domain architecture, Radical SAM core spans asparagine 28–serine 258. Residues cysteine 46, cysteine 50, and cysteine 53 each coordinate [4Fe-4S] cluster. Cysteine 90, cysteine 121, cysteine 181, and arginine 256 together coordinate [2Fe-2S] cluster.

The protein belongs to the radical SAM superfamily. Biotin synthase family. In terms of assembly, homodimer. It depends on [4Fe-4S] cluster as a cofactor. [2Fe-2S] cluster serves as cofactor.

It catalyses the reaction (4R,5S)-dethiobiotin + (sulfur carrier)-SH + 2 reduced [2Fe-2S]-[ferredoxin] + 2 S-adenosyl-L-methionine = (sulfur carrier)-H + biotin + 2 5'-deoxyadenosine + 2 L-methionine + 2 oxidized [2Fe-2S]-[ferredoxin]. Its pathway is cofactor biosynthesis; biotin biosynthesis; biotin from 7,8-diaminononanoate: step 2/2. Catalyzes the conversion of dethiobiotin (DTB) to biotin by the insertion of a sulfur atom into dethiobiotin via a radical-based mechanism. The protein is Biotin synthase of Francisella philomiragia subsp. philomiragia (strain ATCC 25017 / CCUG 19701 / FSC 153 / O#319-036).